The primary structure comprises 350 residues: RNA 3'-terminal phosphate cyclase (350 aa).

ATP-binding positions include Gln-100 and 290 to 294 (FLGDQ). Residue His-314 is the Tele-AMP-histidine intermediate of the active site.

This sequence belongs to the RNA 3'-terminal cyclase family. Type 1 subfamily.

It localises to the cytoplasm. It carries out the reaction a 3'-end 3'-phospho-ribonucleotide-RNA + ATP = a 3'-end 2',3'-cyclophospho-ribonucleotide-RNA + AMP + diphosphate. Catalyzes the conversion of 3'-phosphate to a 2',3'-cyclic phosphodiester at the end of RNA. The mechanism of action of the enzyme occurs in 3 steps: (A) adenylation of the enzyme by ATP; (B) transfer of adenylate to an RNA-N3'P to produce RNA-N3'PP5'A; (C) and attack of the adjacent 2'-hydroxyl on the 3'-phosphorus in the diester linkage to produce the cyclic end product. The biological role of this enzyme is unknown but it is likely to function in some aspects of cellular RNA processing. This Thermococcus sibiricus (strain DSM 12597 / MM 739) protein is RNA 3'-terminal phosphate cyclase.